We begin with the raw amino-acid sequence, 801 residues long: Disks large homolog 4 (801 aa).

The L27 domain occupies 4–60; the sequence is KREDTERALQAMEACQSAGDEGFRTRAERLLTIFQSDLFQALLDIQEFYELTVFENQ. 2 consecutive PDZ domains span residues 153 to 240 and 248 to 335; these read EITL…LRHK and ELKL…AKTL. The segment at 339–373 is disordered; sequence HHQDAYNPPDITSSYSPHMDMSDYPQALSPSSPRR. A PDZ 3 domain is found at 393-474; the sequence is RVVIHRGSTG…TVTIITQYRP (82 aa). Residues 507–577 enclose the SH3 domain; it reads KRSFFIRALF…PSKRRVERKE (71 aa). In terms of domain architecture, Guanylate kinase-like spans 610–786; the sequence is ARPVIILGPS…IYHHVKSVIE (177 aa).

Belongs to the MAGUK family. Post-translationally, ubiquitinated by MDM2 in response to NMDA receptor activation, leading to proteasome-mediated degradation of DLG4 which is required for AMPA receptor endocytosis. In terms of processing, palmitoylated. Palmitoylation is required for targeting to postsynaptic density, plasma membrane and synapses.

Its subcellular location is the cell membrane. The protein localises to the postsynaptic density. It localises to the synapse. Postsynaptic scaffolding protein that plays a critical role in synaptogenesis and synaptic plasticity by providing a platform for the postsynaptic clustering of crucial synaptic proteins. The protein is Disks large homolog 4 (dlg4) of Danio rerio (Zebrafish).